The sequence spans 525 residues: GMP synthase [glutamine-hydrolyzing] (525 aa).

The 199-residue stretch at 9 to 207 (RILILDFGSQ…VQDICGCEAL (199 aa)) folds into the Glutamine amidotransferase type-1 domain. Cysteine 86 (nucleophile) is an active-site residue. Residues histidine 181 and glutamate 183 contribute to the active site. One can recognise a GMPS ATP-PPase domain in the interval 208 to 400 (WTASNIVEDA…LGLPYDMVYR (193 aa)). Position 235–241 (235–241 (SGGVDSS)) interacts with ATP.

As to quaternary structure, homodimer.

The enzyme catalyses XMP + L-glutamine + ATP + H2O = GMP + L-glutamate + AMP + diphosphate + 2 H(+). Its pathway is purine metabolism; GMP biosynthesis; GMP from XMP (L-Gln route): step 1/1. Functionally, catalyzes the synthesis of GMP from XMP. The sequence is that of GMP synthase [glutamine-hydrolyzing] from Pseudomonas entomophila (strain L48).